The primary structure comprises 303 residues: MASRQPEVPALAPSGPLGKMSLPIGMCRRAFSYDDALEDPAPMTPPPSDMGSIPWKPVIPERKYQHLDKTEEGAASVSSLAVTPSPATDSSDKAPVVKAKATHVIMSSLITKQTQESIQRFEQQAGLRDAGYTPHKGLTTEETKYLRVAEALHKLKLQSGETAKEEKHPASAQSTPSSTPHASPKQKSRGWFPSGSSTALPAPNPHTMDPGSGNDRNSADKWSLFGPRPLQKSDSGFAIQAYKGAPRPSPMEVMRAQATRVGEDPATFKPPKMDVPMVEGKKQPLRTHNLKPRDLNVLTPTGF.

Disordered stretches follow at residues 1–20 (MASR…LGKM), 37–56 (LEDP…IPWK), 66–96 (HLDK…KAPV), 156–233 (KLQS…LQKS), and 260–283 (RVGE…GKKQ). Threonine 44 carries the post-translational modification Phosphothreonine. The Flavin-containing monooxygenase motif motif lies at 67–77 (LDKTEEGAASV). Residues 76–89 (SVSSLAVTPSPATD) are compositionally biased toward polar residues. Residues 170–183 (ASAQSTPSSTPHAS) show a composition bias toward low complexity. Threonine 175 is subject to Phosphothreonine. Serine 183 carries the post-translational modification Phosphoserine.

Belongs to the P33MONOX family. In terms of assembly, interacts with NELFB, NOL12 and PRNP. Expressed in neuronal pyramidal cells of the hippocampus and in the neurons of the cortex.

The protein resides in the cytoplasm. Functionally, potential NADPH-dependent oxidoreductase. May be involved in the regulation of neuronal survival, differentiation and axonal outgrowth. This chain is Putative monooxygenase p33MONOX (P33monox), found in Mus musculus (Mouse).